A 139-amino-acid chain; its full sequence is TGKYPFICSECGKSFMDKRYLKIHSNVHSGNTFPCTECGKSFAAKQNLKRHQKIHTGEKPHKCTECGKQFLQKNKLDRHHLSHTGVKPFSCFECGEQFTWKHLLQYHQLSHTGERPFVCSECGKGYKTKASLALHCHIH.

5 C2H2-type zinc fingers span residues 6-28 (FICSECGKSFMDKRYLKIHSNVH), 33-55 (FPCTECGKSFAAKQNLKRHQKIH), 61-83 (HKCTECGKQFLQKNKLDRHHLSH), 89-111 (FSCFECGEQFTWKHLLQYHQLSH), and 117-139 (FVCSECGKGYKTKASLALHCHIH).

The protein belongs to the krueppel C2H2-type zinc-finger protein family.

It localises to the nucleus. Functionally, may be involved in transcriptional regulation. This is Oocyte zinc finger protein XlCOF14 from Xenopus laevis (African clawed frog).